The sequence spans 950 residues: Inactive atromentin synthetase invA4 (950 aa).

Positions 37–460 are adenylation (A) domain; the sequence is SRAVSQYPNH…SGRIKDTVVV (424 aa). A Carrier domain is found at 592 to 670; the sequence is APSTETEKTL…TLAKYVDSLV (79 aa). The segment at 597–667 is thiolation and peptide carrier (T) domain; it reads TEKTLAGIYA…EIITLAKYVD (71 aa). Ser-629 bears the O-(pantetheine 4'-phosphoryl)serine mark. Positions 693–797 are thioesterase (TE) domain; it reads PIFMVHPGIG…GIIDMIPHHM (105 aa).

The protein belongs to the ATP-dependent AMP-binding enzyme family.

Inactive atromentin synthetase homolog. Does not accept 4-hydroxyphenylpyruvate (4-HPP) as substrate. The sequence is that of Inactive atromentin synthetase invA4 (invA4) from Paxillus involutus (Naked brimcap).